Here is a 1046-residue protein sequence, read N- to C-terminus: Probable inorganic carbon transporter subunit DabA1 (1046 aa).

Zn(2+)-binding residues include Cys-462, Asp-464, His-721, and Cys-736.

Belongs to the inorganic carbon transporter (TC 9.A.2) DabA family. Forms a complex with DabB1. Requires Zn(2+) as cofactor.

It is found in the cell inner membrane. Its function is as follows. Part of an energy-coupled inorganic carbon pump. This chain is Probable inorganic carbon transporter subunit DabA1, found in Halothiobacillus neapolitanus (strain ATCC 23641 / c2) (Thiobacillus neapolitanus).